Here is a 423-residue protein sequence, read N- to C-terminus: Gamma-glutamyl phosphate reductase (423 aa).

This sequence belongs to the gamma-glutamyl phosphate reductase family.

The protein localises to the cytoplasm. The enzyme catalyses L-glutamate 5-semialdehyde + phosphate + NADP(+) = L-glutamyl 5-phosphate + NADPH + H(+). It functions in the pathway amino-acid biosynthesis; L-proline biosynthesis; L-glutamate 5-semialdehyde from L-glutamate: step 2/2. Functionally, catalyzes the NADPH-dependent reduction of L-glutamate 5-phosphate into L-glutamate 5-semialdehyde and phosphate. The product spontaneously undergoes cyclization to form 1-pyrroline-5-carboxylate. This chain is Gamma-glutamyl phosphate reductase, found in Pseudomonas putida (strain ATCC 47054 / DSM 6125 / CFBP 8728 / NCIMB 11950 / KT2440).